A 431-amino-acid polypeptide reads, in one-letter code: Gamma conglutin 1 (431 aa).

Residues 1–24 (MASFLHNFLLFFCSLSLIILTSSA) form the signal peptide. The Peptidase A1 domain occupies 51–407 (HVVQIHKRTP…DLMNSRLGFS (357 aa)). Cystine bridges form between C79–C168, C93–C106, C98–C123, C109–C118, and C322–C369.

It belongs to the peptidase A1 family. In terms of assembly, two-subunit monomeric unit made of alpha and beta subunits coupled by disulfide bonds (at pH 4.5 and under non-reducing conditions). Monomeric alpha and beta subunits in reducing conditions. Can also form oligomers including dimer, tetramer and cyclic hexamer (trimer of dimers) (at pH &gt; 5.5). Component of globulins complexes which accumulate in seeds. Interacts with flavonoids (e.g. apigenin glucosides) present in globulins complexes.

It is found in the secreted. The protein resides in the extracellular space. In terms of biological role, sulfur-rich seed storage protein that remains undegraded at germination. The sequence is that of Gamma conglutin 1 from Prunus dulcis (Almond).